Reading from the N-terminus, the 489-residue chain is Glucose-1-phosphate adenylyltransferase small subunit, chloroplastic/amyloplastic (489 aa).

Residues 1-52 constitute a chloroplast transit peptide; the sequence is ITVPSTSSKNLQNSLAFSSSSLSGDKIQTTSFLNRRYCRISSRAPIVVSPKA.

This sequence belongs to the bacterial/plant glucose-1-phosphate adenylyltransferase family. Heterotetramer. Prominently expressed in the leaves. A lower level expression is seen in the roots.

The protein localises to the plastid. It is found in the chloroplast. Its subcellular location is the amyloplast. It carries out the reaction alpha-D-glucose 1-phosphate + ATP + H(+) = ADP-alpha-D-glucose + diphosphate. Its pathway is glycan biosynthesis; starch biosynthesis. Its activity is regulated as follows. Activated by 3'phosphoglycerate, inhibited by orthophosphate. Allosteric regulation. Its function is as follows. This protein plays a role in synthesis of starch. It catalyzes the synthesis of the activated glycosyl donor, ADP-glucose from Glc-1-P and ATP. The polypeptide is Glucose-1-phosphate adenylyltransferase small subunit, chloroplastic/amyloplastic (AGPB1) (Beta vulgaris (Sugar beet)).